A 434-amino-acid polypeptide reads, in one-letter code: Na(+)/H(+) antiporter NhaA 1 (434 aa).

11 helical membrane-spanning segments follow: residues 34 to 54 (GLLLIAAATVAIVWANTPWSA), 73 to 93 (LTLGAWAADGLLAIFFFVAGL), 111 to 131 (ALPVVAAMGGMAVPALVYVLW), 141 to 161 (GWAIPTATDIAFAVAILAVIS), 171 to 191 (FLLTLAVVDDLLAITIIALFY), 194 to 214 (ELHLGYLAAAAVPLLVFALLV), 233 to 253 (VLVHESGVHATVAGVLLGFAV), 278 to 298 (SAGLAVPVFAFFAAGVTVGGF), 313 to 333 (VVTGLVVGKTVGIAGSTWLLA), 346 to 366 (WVDVVGLAMLAGIGFTVSLLI), and 380 to 400 (HVKVGVLVGSLAATALATGVL).

Belongs to the NhaA Na(+)/H(+) (TC 2.A.33) antiporter family.

The protein resides in the cell membrane. The enzyme catalyses Na(+)(in) + 2 H(+)(out) = Na(+)(out) + 2 H(+)(in). In terms of biological role, na(+)/H(+) antiporter that extrudes sodium in exchange for external protons. The sequence is that of Na(+)/H(+) antiporter NhaA 1 from Nocardioides sp. (strain ATCC BAA-499 / JS614).